The chain runs to 207 residues: Acyl-homoserine-lactone synthase (207 aa).

This sequence belongs to the autoinducer synthase family.

The enzyme catalyses a fatty acyl-[ACP] + S-adenosyl-L-methionine = an N-acyl-L-homoserine lactone + S-methyl-5'-thioadenosine + holo-[ACP] + H(+). Functionally, required for the synthesis of N-butanoyl-L-homoserine lactone (BHL), an autoinducer molecule which binds to AsaR. This chain is Acyl-homoserine-lactone synthase (asaI), found in Aeromonas salmonicida.